A 314-amino-acid polypeptide reads, in one-letter code: Putative S-adenosyl-L-methionine-dependent methyltransferase MAV_0301 (314 aa).

S-adenosyl-L-methionine-binding positions include aspartate 132 and 161–162 (DL).

It belongs to the UPF0677 family.

Its function is as follows. Exhibits S-adenosyl-L-methionine-dependent methyltransferase activity. The sequence is that of Putative S-adenosyl-L-methionine-dependent methyltransferase MAV_0301 from Mycobacterium avium (strain 104).